The sequence spans 504 residues: Histidine ammonia-lyase (504 aa).

A cross-link (5-imidazolinone (Ala-Gly)) is located at residues 142 to 144 (ASG). Ser-143 carries the post-translational modification 2,3-didehydroalanine (Ser).

Belongs to the PAL/histidase family. Post-translationally, contains an active site 4-methylidene-imidazol-5-one (MIO), which is formed autocatalytically by cyclization and dehydration of residues Ala-Ser-Gly.

It is found in the cytoplasm. It carries out the reaction L-histidine = trans-urocanate + NH4(+). The protein operates within amino-acid degradation; L-histidine degradation into L-glutamate; N-formimidoyl-L-glutamate from L-histidine: step 1/3. In Staphylococcus aureus (strain bovine RF122 / ET3-1), this protein is Histidine ammonia-lyase.